We begin with the raw amino-acid sequence, 240 residues long: Large ribosomal subunit protein uL2 (240 aa).

Over residues 1 to 20 (MGKRLQSQNRGKGTPRYTSP) the composition is skewed to polar residues. Disordered stretches follow at residues 1 to 33 (MGKR…YRKF) and 204 to 240 (PFGG…TGKR). 2 stretches are compositionally biased toward basic residues: residues 21 to 30 (THKRKGAVKY) and 224 to 240 (SPGR…TGKR).

This sequence belongs to the universal ribosomal protein uL2 family. Part of the 50S ribosomal subunit. Forms a bridge to the 30S subunit in the 70S ribosome.

Functionally, one of the primary rRNA binding proteins. Required for association of the 30S and 50S subunits to form the 70S ribosome, for tRNA binding and peptide bond formation. It has been suggested to have peptidyltransferase activity; this is somewhat controversial. Makes several contacts with the 16S rRNA in the 70S ribosome. This Methanococcus aeolicus (strain ATCC BAA-1280 / DSM 17508 / OCM 812 / Nankai-3) protein is Large ribosomal subunit protein uL2.